The following is a 546-amino-acid chain: Alpha-isocomene synthase (546 aa).

Mg(2+) is bound by residues aspartate 299, aspartate 303, aspartate 443, and glutamate 451. A DDXXD motif motif is present at residues 299–303; that stretch reads DDTYD.

Belongs to the terpene synthase family. Tpsa subfamily. It depends on Mg(2+) as a cofactor. Mn(2+) serves as cofactor. In terms of tissue distribution, highly expressed in roots, lower levels in stems and leaves and detected in disk florets, but not in ray florets.

The catalysed reaction is (2E,6E)-farnesyl diphosphate = (-)-alpha-isocomene + diphosphate. Its pathway is secondary metabolite biosynthesis; terpenoid biosynthesis. Sesquiterpene synthase involved in the biosynthesis of alpha-isocomene as the major product and detectable amounts of beta-caryophyllene, beta-isocomene, silphinene and modeph-2-ene. Produces exclusively the (-)-(E)-beta caryophyllene enantiomer. This is Alpha-isocomene synthase from Matricaria chamomilla var. recutita (German chamomile).